Here is a 457-residue protein sequence, read N- to C-terminus: UDP-N-acetylmuramate--L-alanine ligase (457 aa).

Position 109-115 (109-115 (GTDGKTT)) interacts with ATP.

It belongs to the MurCDEF family.

The protein resides in the cytoplasm. It carries out the reaction UDP-N-acetyl-alpha-D-muramate + L-alanine + ATP = UDP-N-acetyl-alpha-D-muramoyl-L-alanine + ADP + phosphate + H(+). It functions in the pathway cell wall biogenesis; peptidoglycan biosynthesis. Its function is as follows. Cell wall formation. In Thermotoga neapolitana (strain ATCC 49049 / DSM 4359 / NBRC 107923 / NS-E), this protein is UDP-N-acetylmuramate--L-alanine ligase.